Consider the following 510-residue polypeptide: MFVEKVLERTTNLELCSILILLVISLSIYTFYATLNTYLRSVLLSLRLTGPPSLPFLGNCMLVTDKDLMRRCAGKAFDLYGSLVRIWVLLFPFFAVLEPEDLQVILSSKKHTNKVFFYRLMHNFLGDGLITSSGSKWSNHRRLIQPAFHHNLLEKFIDTFVDASQSLYENLDAEAVGTEINIAKYVNNCVLDILNEAVLGVPIKKRGQDVAMMEDSPFRQGKIMMPARFTQPWLLLDGIYHWTKMANDELNQKKRLNDFTRKMIQRRRQIQNNNNGNSERKCLLDHMIEISESNRDFTEEDIVNEACTFMLAGQDSVGAAVAFTLFLLTQNPECQDRCVLELATIFEDSNRAPTMTDLHEMRYMEMCIKEALRLYPSVPLIARKLGEEVRLAKHTLPAGSNVFICPYATHRLAHIYPDPEKFQPERFSPENSENRHPYAFLPFSAGPRYCIGNRFAIMEIKTIVSRLLRSYQLLPVTGKTTIAATFRITLRASGGLWVRLKERDHPLIAH.

Residue C450 participates in heme binding.

Belongs to the cytochrome P450 family. Requires heme as cofactor.

It is found in the endoplasmic reticulum membrane. It localises to the microsome membrane. May be involved in the metabolism of insect hormones and in the breakdown of synthetic insecticides. The polypeptide is Probable cytochrome P450 4aa1 (Cyp4aa1) (Drosophila melanogaster (Fruit fly)).